Reading from the N-terminus, the 388-residue chain is Succinate--CoA ligase [ADP-forming] subunit beta (388 aa).

The ATP-grasp domain maps to 9 to 244 (KQLFAEYGLP…PSQEDEREAH (236 aa)). Residues Lys-46, 53–55 (GRG), Glu-99, Thr-102, and Glu-107 contribute to the ATP site. Asn-199 and Asp-213 together coordinate Mg(2+). Residues Asn-264 and 321 to 323 (GIV) contribute to the substrate site.

The protein belongs to the succinate/malate CoA ligase beta subunit family. Heterotetramer of two alpha and two beta subunits. The cofactor is Mg(2+).

It catalyses the reaction succinate + ATP + CoA = succinyl-CoA + ADP + phosphate. The enzyme catalyses GTP + succinate + CoA = succinyl-CoA + GDP + phosphate. It functions in the pathway carbohydrate metabolism; tricarboxylic acid cycle; succinate from succinyl-CoA (ligase route): step 1/1. Its function is as follows. Succinyl-CoA synthetase functions in the citric acid cycle (TCA), coupling the hydrolysis of succinyl-CoA to the synthesis of either ATP or GTP and thus represents the only step of substrate-level phosphorylation in the TCA. The beta subunit provides nucleotide specificity of the enzyme and binds the substrate succinate, while the binding sites for coenzyme A and phosphate are found in the alpha subunit. The protein is Succinate--CoA ligase [ADP-forming] subunit beta of Marinomonas sp. (strain MWYL1).